The sequence spans 338 residues: UPF0284 protein TV0153 (338 aa).

The protein belongs to the UPF0284 family.

This Thermoplasma volcanium (strain ATCC 51530 / DSM 4299 / JCM 9571 / NBRC 15438 / GSS1) protein is UPF0284 protein TV0153.